We begin with the raw amino-acid sequence, 80 residues long: Exodeoxyribonuclease 7 small subunit (80 aa).

The protein belongs to the XseB family. In terms of assembly, heterooligomer composed of large and small subunits.

It localises to the cytoplasm. The enzyme catalyses Exonucleolytic cleavage in either 5'- to 3'- or 3'- to 5'-direction to yield nucleoside 5'-phosphates.. Bidirectionally degrades single-stranded DNA into large acid-insoluble oligonucleotides, which are then degraded further into small acid-soluble oligonucleotides. This Rickettsia massiliae (strain Mtu5) protein is Exodeoxyribonuclease 7 small subunit.